A 544-amino-acid polypeptide reads, in one-letter code: MISSLAAITGGPSTFRRDPDSNTLRLSRRKTLISVLRSCKNIAHVPSIHAKIIRTFHDQDAFVVFELIRVCSTLDSVDYAYDVFSYVSNPNVYLYTAMIDGFVSSGRSADGVSLYHRMIHNSVLPDNYVITSVLKACDLKVCREIHAQVLKLGFGSSRSVGLKMMEIYGKSGELVNAKKMFDEMPDRDHVAATVMINCYSECGFIKEALELFQDVKIKDTVCWTAMIDGLVRNKEMNKALELFREMQMENVSANEFTAVCVLSACSDLGALELGRWVHSFVENQRMELSNFVGNALINMYSRCGDINEARRVFRVMRDKDVISYNTMISGLAMHGASVEAINEFRDMVNRGFRPNQVTLVALLNACSHGGLLDIGLEVFNSMKRVFNVEPQIEHYGCIVDLLGRVGRLEEAYRFIENIPIEPDHIMLGTLLSACKIHGNMELGEKIAKRLFESENPDSGTYVLLSNLYASSGKWKESTEIRESMRDSGIEKEPGCSTIEVDNQIHEFLVGDIAHPHKEAIYQRLQELNRILRFKENQIDIIMGF.

A disordered region spans residues 1–21 (MISSLAAITGGPSTFRRDPDS). A chloroplast-targeting transit peptide spans 1-25 (MISSLAAITGGPSTFRRDPDSNTLR). 11 PPR repeats span residues 60–90 (DAFV…VSNP), 91–125 (NVYL…SVLP), 127–156 (NYVI…GFGS), 157–187 (SRSV…MPDR), 188–218 (DHVA…VKIK), 219–253 (DTVC…NVSA), 254–288 (NEFT…RMEL), 289–319 (SNFV…MRDK), 320–354 (DVIS…GFRP), 355–385 (NQVT…MKRV), and 391–421 (QIEH…IPIE). A type E motif region spans residues 426–501 (MLGTLLSACK…EPGCSTIEVD (76 aa)). Residues 502–532 (NQIHEFLVGDIAHPHKEAIYQRLQELNRILR) are type E(+) motif.

The protein belongs to the PPR family. PCMP-E subfamily.

Its subcellular location is the plastid. The protein resides in the chloroplast. Involved in RNA editing event in chloroplasts. Required for the editing of a single site in rpl23 transcript. The sequence is that of Putative pentatricopeptide repeat-containing protein At5g59200, chloroplastic (PCMP-E41) from Arabidopsis thaliana (Mouse-ear cress).